Reading from the N-terminus, the 202-residue chain is FMN-dependent NADH:quinone oxidoreductase (202 aa).

FMN is bound by residues Ser-9, 15–17 (SAS), and 94–97 (MYNL).

It belongs to the azoreductase type 1 family. As to quaternary structure, homodimer. Requires FMN as cofactor.

The catalysed reaction is 2 a quinone + NADH + H(+) = 2 a 1,4-benzosemiquinone + NAD(+). It catalyses the reaction N,N-dimethyl-1,4-phenylenediamine + anthranilate + 2 NAD(+) = 2-(4-dimethylaminophenyl)diazenylbenzoate + 2 NADH + 2 H(+). Functionally, quinone reductase that provides resistance to thiol-specific stress caused by electrophilic quinones. Its function is as follows. Also exhibits azoreductase activity. Catalyzes the reductive cleavage of the azo bond in aromatic azo compounds to the corresponding amines. In Gluconobacter oxydans (strain 621H) (Gluconobacter suboxydans), this protein is FMN-dependent NADH:quinone oxidoreductase.